Here is a 421-residue protein sequence, read N- to C-terminus: 3-isopropylmalate dehydratase large subunit (421 aa).

[4Fe-4S] cluster-binding residues include cysteine 302, cysteine 362, and cysteine 365.

This sequence belongs to the aconitase/IPM isomerase family. LeuC type 2 subfamily. In terms of assembly, heterodimer of LeuC and LeuD. [4Fe-4S] cluster serves as cofactor.

It carries out the reaction (2R,3S)-3-isopropylmalate = (2S)-2-isopropylmalate. Its pathway is amino-acid biosynthesis; L-leucine biosynthesis; L-leucine from 3-methyl-2-oxobutanoate: step 2/4. Its function is as follows. Catalyzes the isomerization between 2-isopropylmalate and 3-isopropylmalate, via the formation of 2-isopropylmaleate. This Campylobacter concisus (strain 13826) protein is 3-isopropylmalate dehydratase large subunit.